Here is a 126-residue protein sequence, read N- to C-terminus: UPF0102 protein TP_0913 (126 aa).

Belongs to the UPF0102 family.

In Treponema pallidum (strain Nichols), this protein is UPF0102 protein TP_0913.